Consider the following 339-residue polypeptide: DNA-directed RNA polymerase subunit alpha (339 aa).

The tract at residues 1–237 (MENELMYMNW…EQMNVFINFD (237 aa)) is alpha N-terminal domain (alpha-NTD). The interval 256–339 (FNENLYRSVN…PPAEDNKEGE (84 aa)) is alpha C-terminal domain (alpha-CTD).

The protein belongs to the RNA polymerase alpha chain family. Homodimer. The RNAP catalytic core consists of 2 alpha, 1 beta, 1 beta' and 1 omega subunit. When a sigma factor is associated with the core the holoenzyme is formed, which can initiate transcription.

The catalysed reaction is RNA(n) + a ribonucleoside 5'-triphosphate = RNA(n+1) + diphosphate. DNA-dependent RNA polymerase catalyzes the transcription of DNA into RNA using the four ribonucleoside triphosphates as substrates. The polypeptide is DNA-directed RNA polymerase subunit alpha (Desulfosudis oleivorans (strain DSM 6200 / JCM 39069 / Hxd3) (Desulfococcus oleovorans)).